The primary structure comprises 99 residues: Protein translation factor SUI1 homolog (99 aa).

It belongs to the SUI1 family.

In Picrophilus torridus (strain ATCC 700027 / DSM 9790 / JCM 10055 / NBRC 100828 / KAW 2/3), this protein is Protein translation factor SUI1 homolog.